The following is a 770-amino-acid chain: MNKYKPVPKLSSQSPVHHTNLRIPPSGRPFKKEDFLNLISKDSLESDSESLPQEAKSWSDIKDQIQDKDMEPDSLEEDSPSETEEAVNRKAAHNTNREDLSAHDAGVNHSQHQVEDKYSDLRYDPNWKNKREEGQPLAGEALPGSADSSSENLPLAPLYPSREPSMGLSAGKGKEKKSPQSEASLLGSEFLSPKYERSTRQNGFFSELSDSDQEEKSSGLSQYLKSSSSHNDVFLPGSRGPRRRKSKQYFVEKNKLTLGLPMPKTDSYLQLHNKKRGETRLEQISYPVRDTDKMTVQNDKEVENTFMDPEDKWHQRAKQLKNYQEHLSQYEDTKSGNVPRGQSSDAANGQQPSRRTAKARVRKQRKHQKGLKSLGTKELVVSQNNQNNPFQQPQNQRQTADASAKHELAAQTNASNPNLQDARTLTHNPKVTSDSFVSPKQALDRALYKNSISGLNANKRRGHRREEERILYQPQPIYVFSDTHLQDFNELPHRHESPSQRAPQSDHHMNTHRSTKTKKPAKQPQAETKYKNIEMLWKFHSSSDMEPASASPDSRLAQIMEQHQQALMQLAEVQPSEGSLASIILPPILSRVESESQLNSERSHRHQVKMARSNSEGYLLQLERGKRHRKRSSTKSSKLKGYQKRDVKLGGLGPDFASVRDKMQMLMQQKEYAQQVKDYNMKALSILSKPQTSKTESKSAISRKKALDYAKTIPKPKPPNLPDQTAKKTKNSRHSEKEGGLPEISLLEILQSRHEREKQAVAAFKVLHIV.

Disordered regions lie at residues 1–249 (MNKY…SKQY), 295–438 (TVQN…SFVS), 493–527 (HRHE…PQAE), 595–647 (ESQL…KRDV), and 708–740 (DYAK…KEGG). A compositionally biased stretch (basic and acidic residues) spans 57 to 71 (SWSDIKDQIQDKDME). Residues 72 to 85 (PDSLEEDSPSETEE) are compositionally biased toward acidic residues. Basic and acidic residues predominate over residues 112–134 (HQVEDKYSDLRYDPNWKNKREEG). The segment covering 218-229 (SGLSQYLKSSSS) has biased composition (low complexity). The span at 295–314 (TVQNDKEVENTFMDPEDKWH) shows a compositional bias: basic and acidic residues. The span at 340 to 354 (RGQSSDAANGQQPSR) shows a compositional bias: polar residues. Residues 355 to 370 (RTAKARVRKQRKHQKG) are compositionally biased toward basic residues. Over residues 383–398 (QNNQNNPFQQPQNQRQ) the composition is skewed to low complexity. Residues 410–438 (AQTNASNPNLQDARTLTHNPKVTSDSFVS) show a composition bias toward polar residues. Residues 493–509 (HRHESPSQRAPQSDHHM) show a composition bias toward basic and acidic residues. Composition is skewed to basic residues over residues 510–521 (NTHRSTKTKKPA) and 625–642 (GKRH…LKGY).

In terms of tissue distribution, expressed in the brain, specifically in hypothalamus, pineal gland, and ependymal cells of the aqueduct of Sylvius, as well as in the choroid plexus of the third ventricle. Expressed in the ependymal cells lining the lateral ventricles (at protein level).

In terms of biological role, required for the normal development of cilia in brain ependymal cells lining the ventricular surfaces. The protein is Jhy protein of Mus musculus (Mouse).